The sequence spans 487 residues: Glutamate--tRNA ligase (487 aa).

A 'HIGH' region motif is present at residues 10–20 (PSPTGYMHVGN). Residues 251–255 (KLSKR) carry the 'KMSKS' region motif. Lys254 serves as a coordination point for ATP.

Belongs to the class-I aminoacyl-tRNA synthetase family. Glutamate--tRNA ligase type 1 subfamily. As to quaternary structure, monomer.

It is found in the cytoplasm. The enzyme catalyses tRNA(Glu) + L-glutamate + ATP = L-glutamyl-tRNA(Glu) + AMP + diphosphate. Its function is as follows. Catalyzes the attachment of glutamate to tRNA(Glu) in a two-step reaction: glutamate is first activated by ATP to form Glu-AMP and then transferred to the acceptor end of tRNA(Glu). This Clostridium kluyveri (strain ATCC 8527 / DSM 555 / NBRC 12016 / NCIMB 10680 / K1) protein is Glutamate--tRNA ligase.